Reading from the N-terminus, the 410-residue chain is Argininosuccinate synthase (410 aa).

Position 9-17 (9-17) interacts with ATP; sequence AYSGGLDTS. Tyrosine 86 serves as a coordination point for L-citrulline. An ATP-binding site is contributed by glycine 116. L-aspartate-binding residues include threonine 118, asparagine 122, and aspartate 123. Residue asparagine 122 participates in L-citrulline binding. Positions 126, 174, 259, and 271 each coordinate L-citrulline.

This sequence belongs to the argininosuccinate synthase family. Type 1 subfamily. In terms of assembly, homotetramer.

The protein resides in the cytoplasm. It carries out the reaction L-citrulline + L-aspartate + ATP = 2-(N(omega)-L-arginino)succinate + AMP + diphosphate + H(+). It participates in amino-acid biosynthesis; L-arginine biosynthesis; L-arginine from L-ornithine and carbamoyl phosphate: step 2/3. The polypeptide is Argininosuccinate synthase (Limosilactobacillus reuteri (strain DSM 20016) (Lactobacillus reuteri)).